The following is a 142-amino-acid chain: Hemoglobin subunit alpha-4 (142 aa).

N-acetylserine is present on Ser1. The region spanning 1-142 is the Globin domain; sequence SLSAKDKANV…LALALAEKYR (142 aa). Position 59 (His59) interacts with O2. His88 is a heme b binding site.

It belongs to the globin family. Heterotetramer of two alpha chains and two beta chains. As to expression, red blood cells.

In terms of biological role, involved in oxygen transport from gills to the various peripheral tissues. The protein is Hemoglobin subunit alpha-4 (hba4) of Oncorhynchus mykiss (Rainbow trout).